Here is a 145-residue protein sequence, read N- to C-terminus: Large ribosomal subunit protein uL11 (145 aa).

It belongs to the universal ribosomal protein uL11 family. In terms of assembly, part of the ribosomal stalk of the 50S ribosomal subunit. Interacts with L10 and the large rRNA to form the base of the stalk. L10 forms an elongated spine to which L12 dimers bind in a sequential fashion forming a multimeric L10(L12)X complex. One or more lysine residues are methylated.

Its function is as follows. Forms part of the ribosomal stalk which helps the ribosome interact with GTP-bound translation factors. This is Large ribosomal subunit protein uL11 from Flavobacterium johnsoniae (strain ATCC 17061 / DSM 2064 / JCM 8514 / BCRC 14874 / CCUG 350202 / NBRC 14942 / NCIMB 11054 / UW101) (Cytophaga johnsonae).